The chain runs to 705 residues: Elongation factor G (705 aa).

The tr-type G domain maps to 7–287 (HLTRNIGIMA…YVCAFLPSPL (281 aa)). Residues 16–23 (AHIDAGKT), 84–88 (DTPGH), and 138–141 (NKMD) contribute to the GTP site. A disordered region spans residues 293-312 (VGTNPTTGAEEDRKPSEDEK). The segment covering 302-312 (EEDRKPSEDEK) has biased composition (basic and acidic residues).

This sequence belongs to the TRAFAC class translation factor GTPase superfamily. Classic translation factor GTPase family. EF-G/EF-2 subfamily.

The protein localises to the cytoplasm. Catalyzes the GTP-dependent ribosomal translocation step during translation elongation. During this step, the ribosome changes from the pre-translocational (PRE) to the post-translocational (POST) state as the newly formed A-site-bound peptidyl-tRNA and P-site-bound deacylated tRNA move to the P and E sites, respectively. Catalyzes the coordinated movement of the two tRNA molecules, the mRNA and conformational changes in the ribosome. In Phocaeicola vulgatus (strain ATCC 8482 / DSM 1447 / JCM 5826 / CCUG 4940 / NBRC 14291 / NCTC 11154) (Bacteroides vulgatus), this protein is Elongation factor G.